A 37-amino-acid polypeptide reads, in one-letter code: Lambda-hexatoxin-Hf1a (37 aa).

4 disulfide bridges follow: Cys-4–Cys-18, Cys-11–Cys-23, Cys-14–Cys-15, and Cys-17–Cys-34.

Belongs to the neurotoxin 11 (kappa toxin) family. Expressed by the venom gland.

The protein localises to the secreted. This excitatory toxin inhibits insect calcium-activated potassium (KCa) channels (Slo-type). This chain is Lambda-hexatoxin-Hf1a, found in Hadronyche formidabilis (Northern tree funnel-web spider).